An 84-amino-acid chain; its full sequence is Large ribosomal subunit protein bL27 (84 aa).

The interval 1–25 (MAHKKGQGSTQNNRDSAGRRLGVKK) is disordered.

The protein belongs to the bacterial ribosomal protein bL27 family.

In Sulfurovum sp. (strain NBC37-1), this protein is Large ribosomal subunit protein bL27.